The chain runs to 322 residues: Short-chain dehydrogenase TIC 32, chloroplastic (322 aa).

Residues 36–42, 88–89, Asn115, and Thr136 each bind NADP(+); these read GASSGIG and DL. Ser170 contributes to the substrate binding site. Residue Tyr192 is the Proton acceptor of the active site. The interval 298-314 is interaction with calmodulin; sequence DTELAKKVWDFSTKLTD.

This sequence belongs to the short-chain dehydrogenases/reductases (SDR) family. As to quaternary structure, part of the Tic complex. Interacts with TIC110. As to expression, expressed in leaves and roots.

Its subcellular location is the plastid. The protein resides in the chloroplast inner membrane. Its function is as follows. Involved in protein precursor import into chloroplasts. Part of the redox regulon consisting of TIC32, TIC 55 and TIC62. The polypeptide is Short-chain dehydrogenase TIC 32, chloroplastic (Arabidopsis thaliana (Mouse-ear cress)).